The primary structure comprises 655 residues: Sphingomyelin phosphodiesterase 3 (655 aa).

Residues 1-10 are Cytoplasmic-facing; it reads MVLYTTPFPN. Residues 11–31 constitute an intramembrane region (helical); the sequence is SCLSALHAVSWALIFPCYWLV. Over 32–64 the chain is Cytoplasmic; sequence DRLLASFIPTTYEKRQRADDPCCLQLFCTVLFT. 3 S-palmitoyl cysteine lipidation sites follow: cysteine 53, cysteine 54, and cysteine 59. The helical intramembrane region spans 65–85; the sequence is PVYLALLVAALPFAFLGFIFW. Residues 86–655 are Cytoplasmic-facing; it reads SPLQSARRPY…LMVSAGEEEA (570 aa). Serine 178 bears the Phosphoserine mark. Residues 209 to 318 form a disordered region; that stretch reads VEYKGDGGRH…SGGSGEPGAN (110 aa). 2 stretches are compositionally biased toward basic and acidic residues: residues 211-221 and 246-255; these read YKGDGGRHPSD and GGEEGGRPQE. Phosphoserine is present on serine 289. Residue glutamate 362 participates in Mg(2+) binding. Residues cysteine 395 and cysteine 396 are each lipidated (S-palmitoyl cysteine). The active-site Proton acceptor is the histidine 639.

This sequence belongs to the neutral sphingomyelinase family. The cofactor is Mg(2+). Palmitoylated, palmitoylation-deficient proteins are targeted for lysosomal degradation. In terms of tissue distribution, predominantly expressed in brain (at protein level).

The protein resides in the golgi apparatus membrane. The protein localises to the cell membrane. The enzyme catalyses a sphingomyelin + H2O = phosphocholine + an N-acylsphing-4-enine + H(+). It catalyses the reaction N-(15Z-tetracosenoyl)sphing-4-enine-1-phosphocholine + H2O = N-(15Z-tetracosenoyl)-sphing-4-enine + phosphocholine + H(+). The catalysed reaction is N-(tetracosanoyl)-sphing-4-enine-1-phosphocholine + H2O = N-tetracosanoyl-sphing-4-enine + phosphocholine + H(+). It carries out the reaction N-(hexadecanoyl)-sphing-4-enine-1-phosphocholine + H2O = N-hexadecanoylsphing-4-enine + phosphocholine + H(+). The enzyme catalyses an N-(acyl)-sphingosylphosphocholine + H2O = an N-acyl-sphingoid base + phosphocholine + H(+). It catalyses the reaction 1-hexadecanoyl-sn-glycero-3-phosphocholine + H2O = 1-hexadecanoyl-sn-glycerol + phosphocholine + H(+). The catalysed reaction is 1-O-octadecyl-sn-glycero-3-phosphocholine + H2O = 1-O-octadecyl-sn-glycerol + phosphocholine + H(+). It carries out the reaction a sphingosylphosphocholine + H2O = a sphingoid base + phosphocholine + H(+). It functions in the pathway lipid metabolism; sphingolipid metabolism. With respect to regulation, inhibited by nSMase inhibitor GW4869. Binding of anionic phospholipids (APLs) such as phosphatidylserine (PS) and phosphatidic acid (PA) increases enzymatic activity. Its function is as follows. Catalyzes the hydrolysis of sphingomyelin to form ceramide and phosphocholine. Ceramide mediates numerous cellular functions, such as apoptosis and growth arrest, and is capable of regulating these 2 cellular events independently. Also hydrolyzes sphingosylphosphocholine. Regulates the cell cycle by acting as a growth suppressor in confluent cells. Probably acts as a regulator of postnatal development and participates in bone and dentin mineralization. Binds to anionic phospholipids (APLs) such as phosphatidylserine (PS) and phosphatidic acid (PA) that modulate enzymatic activity and subcellular location. May be involved in IL-1-beta-induced JNK activation in hepatocytes. May act as a mediator in transcriptional regulation of NOS2/iNOS via the NF-kappa-B activation under inflammatory conditions. The protein is Sphingomyelin phosphodiesterase 3 of Mus musculus (Mouse).